A 269-amino-acid chain; its full sequence is 5'-nucleotidase SurE (269 aa).

Residues aspartate 11, aspartate 12, serine 43, and asparagine 101 each coordinate a divalent metal cation.

The protein belongs to the SurE nucleotidase family. Requires a divalent metal cation as cofactor.

Its subcellular location is the cytoplasm. It catalyses the reaction a ribonucleoside 5'-phosphate + H2O = a ribonucleoside + phosphate. Its function is as follows. Nucleotidase that shows phosphatase activity on nucleoside 5'-monophosphates. The polypeptide is 5'-nucleotidase SurE (Prochlorococcus marinus (strain MIT 9301)).